A 421-amino-acid polypeptide reads, in one-letter code: Histidine--tRNA ligase (421 aa).

The protein belongs to the class-II aminoacyl-tRNA synthetase family. As to quaternary structure, homodimer.

The protein resides in the cytoplasm. The enzyme catalyses tRNA(His) + L-histidine + ATP = L-histidyl-tRNA(His) + AMP + diphosphate + H(+). In Francisella tularensis subsp. mediasiatica (strain FSC147), this protein is Histidine--tRNA ligase.